The sequence spans 932 residues: DNA mismatch repair protein MutS (932 aa).

615-622 (GPNMAGKS) lines the ATP pocket.

Belongs to the DNA mismatch repair MutS family.

In terms of biological role, this protein is involved in the repair of mismatches in DNA. It is possible that it carries out the mismatch recognition step. This protein has a weak ATPase activity. This Clostridium botulinum (strain Langeland / NCTC 10281 / Type F) protein is DNA mismatch repair protein MutS.